The chain runs to 328 residues: Biotin synthase (328 aa).

A Radical SAM core domain is found at 41-260; the sequence is TAIETASLLS…VALARILMPA (220 aa). Positions 56, 60, and 63 each coordinate [4Fe-4S] cluster. 4 residues coordinate [2Fe-2S] cluster: Cys100, Cys131, Cys191, and Arg264.

The protein belongs to the radical SAM superfamily. Biotin synthase family. Homodimer. [4Fe-4S] cluster serves as cofactor. [2Fe-2S] cluster is required as a cofactor.

It catalyses the reaction (4R,5S)-dethiobiotin + (sulfur carrier)-SH + 2 reduced [2Fe-2S]-[ferredoxin] + 2 S-adenosyl-L-methionine = (sulfur carrier)-H + biotin + 2 5'-deoxyadenosine + 2 L-methionine + 2 oxidized [2Fe-2S]-[ferredoxin]. Its pathway is cofactor biosynthesis; biotin biosynthesis; biotin from 7,8-diaminononanoate: step 2/2. In terms of biological role, catalyzes the conversion of dethiobiotin (DTB) to biotin by the insertion of a sulfur atom into dethiobiotin via a radical-based mechanism. The polypeptide is Biotin synthase (Cereibacter sphaeroides (strain ATCC 17023 / DSM 158 / JCM 6121 / CCUG 31486 / LMG 2827 / NBRC 12203 / NCIMB 8253 / ATH 2.4.1.) (Rhodobacter sphaeroides)).